Reading from the N-terminus, the 822-residue chain is LPS-assembly protein LptD (822 aa).

A signal peptide spans 1–37 (MRRASRSPFILSPVAHAVSRLVLCATLGWTYAGSGHA). Positions 38-97 (QVPAPAGGSEVPLGARPPASAPVAAQQETPLKLKSSPALAEEVPNGPGDEGPTFVFGDSV) are disordered.

The protein belongs to the LptD family. Component of the lipopolysaccharide transport and assembly complex. Interacts with LptE and LptA.

It localises to the cell outer membrane. In terms of biological role, together with LptE, is involved in the assembly of lipopolysaccharide (LPS) at the surface of the outer membrane. The polypeptide is LPS-assembly protein LptD (Polaromonas sp. (strain JS666 / ATCC BAA-500)).